A 200-amino-acid polypeptide reads, in one-letter code: Dephospho-CoA kinase (200 aa).

Residues 3–200 (RIGLTGGIGS…LIAEILSRVN (198 aa)) form the DPCK domain. 11-16 (GSGKST) provides a ligand contact to ATP.

Belongs to the CoaE family.

The protein localises to the cytoplasm. It carries out the reaction 3'-dephospho-CoA + ATP = ADP + CoA + H(+). It participates in cofactor biosynthesis; coenzyme A biosynthesis; CoA from (R)-pantothenate: step 5/5. Catalyzes the phosphorylation of the 3'-hydroxyl group of dephosphocoenzyme A to form coenzyme A. The sequence is that of Dephospho-CoA kinase from Corynebacterium glutamicum (strain ATCC 13032 / DSM 20300 / JCM 1318 / BCRC 11384 / CCUG 27702 / LMG 3730 / NBRC 12168 / NCIMB 10025 / NRRL B-2784 / 534).